The primary structure comprises 475 residues: Aspartyl/glutamyl-tRNA(Asn/Gln) amidotransferase subunit B (475 aa).

It belongs to the GatB/GatE family. GatB subfamily. Heterotrimer of A, B and C subunits.

The catalysed reaction is L-glutamyl-tRNA(Gln) + L-glutamine + ATP + H2O = L-glutaminyl-tRNA(Gln) + L-glutamate + ADP + phosphate + H(+). It carries out the reaction L-aspartyl-tRNA(Asn) + L-glutamine + ATP + H2O = L-asparaginyl-tRNA(Asn) + L-glutamate + ADP + phosphate + 2 H(+). Its function is as follows. Allows the formation of correctly charged Asn-tRNA(Asn) or Gln-tRNA(Gln) through the transamidation of misacylated Asp-tRNA(Asn) or Glu-tRNA(Gln) in organisms which lack either or both of asparaginyl-tRNA or glutaminyl-tRNA synthetases. The reaction takes place in the presence of glutamine and ATP through an activated phospho-Asp-tRNA(Asn) or phospho-Glu-tRNA(Gln). The chain is Aspartyl/glutamyl-tRNA(Asn/Gln) amidotransferase subunit B from Staphylococcus carnosus (strain TM300).